The chain runs to 633 residues: 1-deoxy-D-xylulose-5-phosphate synthase (633 aa).

The span at 1 to 12 shows a compositional bias: polar residues; sequence MSEPTANLQPAS. The segment at 1–21 is disordered; the sequence is MSEPTANLQPASRTPLLDRVN. Residues H86 and 127 to 129 each bind thiamine diphosphate; that span reads GHA. D158 is a Mg(2+) binding site. Thiamine diphosphate-binding positions include 159–160, N187, and E377; that span reads GS. N187 is a binding site for Mg(2+).

Belongs to the transketolase family. DXPS subfamily. As to quaternary structure, homodimer. Mg(2+) serves as cofactor. Requires thiamine diphosphate as cofactor.

It catalyses the reaction D-glyceraldehyde 3-phosphate + pyruvate + H(+) = 1-deoxy-D-xylulose 5-phosphate + CO2. It participates in metabolic intermediate biosynthesis; 1-deoxy-D-xylulose 5-phosphate biosynthesis; 1-deoxy-D-xylulose 5-phosphate from D-glyceraldehyde 3-phosphate and pyruvate: step 1/1. Its function is as follows. Catalyzes the acyloin condensation reaction between C atoms 2 and 3 of pyruvate and glyceraldehyde 3-phosphate to yield 1-deoxy-D-xylulose-5-phosphate (DXP). The polypeptide is 1-deoxy-D-xylulose-5-phosphate synthase (Deinococcus geothermalis (strain DSM 11300 / CIP 105573 / AG-3a)).